The following is a 376-amino-acid chain: N-acetyldiaminopimelate deacetylase (376 aa).

Residue aspartate 69 is part of the active site. The Proton acceptor role is filled by glutamate 128.

It belongs to the peptidase M20A family. N-acetyldiaminopimelate deacetylase subfamily.

It catalyses the reaction N-acetyl-(2S,6S)-2,6-diaminopimelate + H2O = (2S,6S)-2,6-diaminopimelate + acetate. It participates in amino-acid biosynthesis; L-lysine biosynthesis via DAP pathway; LL-2,6-diaminopimelate from (S)-tetrahydrodipicolinate (acetylase route): step 3/3. Its function is as follows. Catalyzes the conversion of N-acetyl-diaminopimelate to diaminopimelate and acetate. In Streptococcus pneumoniae (strain Taiwan19F-14), this protein is N-acetyldiaminopimelate deacetylase.